We begin with the raw amino-acid sequence, 932 residues long: DNA mismatch repair protein MutS (932 aa).

615–622 (GPNMAGKS) lines the ATP pocket.

Belongs to the DNA mismatch repair MutS family.

In terms of biological role, this protein is involved in the repair of mismatches in DNA. It is possible that it carries out the mismatch recognition step. This protein has a weak ATPase activity. The polypeptide is DNA mismatch repair protein MutS (Clostridium botulinum (strain Kyoto / Type A2)).